The following is an 89-amino-acid chain: Small ribosomal subunit protein uS15 (89 aa).

The interval Met-1–Gly-23 is disordered.

It belongs to the universal ribosomal protein uS15 family. Part of the 30S ribosomal subunit. Forms a bridge to the 50S subunit in the 70S ribosome, contacting the 23S rRNA.

Functionally, one of the primary rRNA binding proteins, it binds directly to 16S rRNA where it helps nucleate assembly of the platform of the 30S subunit by binding and bridging several RNA helices of the 16S rRNA. Forms an intersubunit bridge (bridge B4) with the 23S rRNA of the 50S subunit in the ribosome. The chain is Small ribosomal subunit protein uS15 from Treponema pallidum (strain Nichols).